The following is a 238-amino-acid chain: ATP-dependent Clp protease proteolytic subunit 4 (238 aa).

Ser113 functions as the Nucleophile in the catalytic mechanism. Residue His138 is part of the active site.

This sequence belongs to the peptidase S14 family. In terms of assembly, fourteen ClpP subunits assemble into 2 heptameric rings which stack back to back to give a disk-like structure with a central cavity, resembling the structure of eukaryotic proteasomes.

It localises to the cytoplasm. It catalyses the reaction Hydrolysis of proteins to small peptides in the presence of ATP and magnesium. alpha-casein is the usual test substrate. In the absence of ATP, only oligopeptides shorter than five residues are hydrolyzed (such as succinyl-Leu-Tyr-|-NHMec, and Leu-Tyr-Leu-|-Tyr-Trp, in which cleavage of the -Tyr-|-Leu- and -Tyr-|-Trp bonds also occurs).. Functionally, cleaves peptides in various proteins in a process that requires ATP hydrolysis. Has a chymotrypsin-like activity. Plays a major role in the degradation of misfolded proteins. This Frankia casuarinae (strain DSM 45818 / CECT 9043 / HFP020203 / CcI3) protein is ATP-dependent Clp protease proteolytic subunit 4.